The primary structure comprises 511 residues: Pickpocket protein 19 (511 aa).

A run of 2 helical transmembrane segments spans residues 59-79 (LWLA…TVLM) and 471-491 (GIIS…LFVL).

This sequence belongs to the amiloride-sensitive sodium channel (TC 1.A.6) family. As to expression, expressed in the tracheal system. Expressed in the taste-sensing terminal organ of the larval head. In adults, expressed in hairs on the tibia, femur and wing margin, but not in hairs on the tarsi of the leg.

It localises to the membrane. Its function is as follows. Part of a complex that plays a role in tracheal liquid clearance. In both larvae and adults, contributes to the behavioral response to salt. Probable role in sodium transport. The sequence is that of Pickpocket protein 19 (ppk19) from Drosophila melanogaster (Fruit fly).